The sequence spans 85 residues: Large ribosomal subunit protein bL27 (85 aa).

This sequence belongs to the bacterial ribosomal protein bL27 family.

This chain is Large ribosomal subunit protein bL27, found in Leptospira biflexa serovar Patoc (strain Patoc 1 / Ames).